Here is a 528-residue protein sequence, read N- to C-terminus: GMP synthase [glutamine-hydrolyzing] (528 aa).

The 192-residue stretch at 13 to 204 (AIVILDFGSQ…VYHICGCEPD (192 aa)) folds into the Glutamine amidotransferase type-1 domain. The active-site Nucleophile is the C90. Active-site residues include H178 and E180. Positions 205–403 (WTTTAFIEEA…LGLPEEIVRR (199 aa)) constitute a GMPS ATP-PPase domain. Position 232–238 (232–238 (SGGVDSS)) interacts with ATP.

Homodimer.

It carries out the reaction XMP + L-glutamine + ATP + H2O = GMP + L-glutamate + AMP + diphosphate + 2 H(+). The protein operates within purine metabolism; GMP biosynthesis; GMP from XMP (L-Gln route): step 1/1. Its function is as follows. Catalyzes the synthesis of GMP from XMP. The protein is GMP synthase [glutamine-hydrolyzing] of Prochlorococcus marinus (strain MIT 9303).